A 198-amino-acid chain; its full sequence is Charged multivesicular body protein 1a (198 aa).

Coiled-coil stretches lie at residues 7 to 41 and 176 to 198; these read QLKF…QQKN and GETS…ALRN. Residues 171–198 form a disordered region; sequence GASALGETSARAQEKEDQLSRRLAALRN. The short motif at 187–197 is the MIT-interacting motif element; the sequence is DQLSRRLAALR.

It belongs to the SNF7 family. In terms of assembly, probable peripherally associated component of the endosomal sorting required for transport complex III (ESCRT-III).

It localises to the cytoplasm. The protein resides in the endosome membrane. Its function is as follows. Probable peripherally associated component of the endosomal sorting required for transport complex III (ESCRT-III) which is involved in multivesicular bodies (MVBs) formation and sorting of endosomal cargo proteins into MVBs. MVBs contain intraluminal vesicles (ILVs) that are generated by invagination and scission from the limiting membrane of the endosome and mostly are delivered to lysosomes enabling degradation of membrane proteins, such as stimulated growth factor receptors, lysosomal enzymes and lipids. In Danio rerio (Zebrafish), this protein is Charged multivesicular body protein 1a (chmp1a).